A 55-amino-acid chain; its full sequence is Large ribosomal subunit protein bL33 (55 aa).

The protein belongs to the bacterial ribosomal protein bL33 family.

The sequence is that of Large ribosomal subunit protein bL33 from Rhizorhabdus wittichii (strain DSM 6014 / CCUG 31198 / JCM 15750 / NBRC 105917 / EY 4224 / RW1) (Sphingomonas wittichii).